A 381-amino-acid chain; its full sequence is UDP-4-amino-4-deoxy-L-arabinose--oxoglutarate aminotransferase (381 aa).

The residue at position 182 (K182) is an N6-(pyridoxal phosphate)lysine.

The protein belongs to the DegT/DnrJ/EryC1 family. ArnB subfamily. In terms of assembly, homodimer. Pyridoxal 5'-phosphate is required as a cofactor.

It catalyses the reaction UDP-4-amino-4-deoxy-beta-L-arabinose + 2-oxoglutarate = UDP-beta-L-threo-pentopyranos-4-ulose + L-glutamate. It participates in nucleotide-sugar biosynthesis; UDP-4-deoxy-4-formamido-beta-L-arabinose biosynthesis; UDP-4-deoxy-4-formamido-beta-L-arabinose from UDP-alpha-D-glucuronate: step 2/3. The protein operates within bacterial outer membrane biogenesis; lipopolysaccharide biosynthesis. Catalyzes the conversion of UDP-4-keto-arabinose (UDP-Ara4O) to UDP-4-amino-4-deoxy-L-arabinose (UDP-L-Ara4N). The modified arabinose is attached to lipid A and is required for resistance to polymyxin and cationic antimicrobial peptides. This Proteus mirabilis (strain HI4320) protein is UDP-4-amino-4-deoxy-L-arabinose--oxoglutarate aminotransferase.